The chain runs to 380 residues: Asporin (380 aa).

The first 14 residues, 1-14, serve as a signal peptide directing secretion; sequence MKEYVLLLFLALCS. Positions 15–32 are excised as a propeptide; that stretch reads AKPFFSPSHIALKNMMLK. Residues 35 to 54 are compositionally biased toward acidic residues; that stretch reads EDTDDDDDDDDDDDDDDEDN. Residues 35 to 59 form a disordered region; the sequence is EDTDDDDDDDDDDDDDDEDNSLFPT. O-linked (GalNAc...) serine glycosylation occurs at S55. Positions 66 to 102 constitute an LRRNT domain; that stretch reads FFPFDLFPMCPFGCQCYSRVVHCSDLGLTSVPTNIPF. 2 cysteine pairs are disulfide-bonded: C75/C81 and C79/C88. LRR repeat units lie at residues 103 to 124, 127 to 148, 151 to 173, 174 to 193, 196 to 219, 242 to 263, 266 to 287, 290 to 312, 313 to 334, 335 to 357, and 358 to 380; these read DTRM…DFKG, SLYG…AFLT, KLRR…PKSL, AELR…TFKG, ALHV…AFEG, TLLE…DFKR, ELQR…SLAN, RVRE…PELK, YLQI…DFCP, TVPK…VKYW, and EMQP…NFGM. The segment at 166–212 is interaction with TGFB1; sequence PLNLPKSLAELRIHENKVKKIQKDTFKGMNALHVLEMSANPLDNNGI. A glycan (N-linked (GlcNAc...) asparagine) is linked at N282. C333 and C366 are joined by a disulfide.

It belongs to the small leucine-rich proteoglycan (SLRP) family. SLRP class I subfamily. Interacts with TGFB1, TGFB2 and TGFB3. DCN, BGN, and FMOD inhibit binding to TGFB1. Interacts with BMP2. Interacts in vitro with type II collagen. Interacts with type I collagen. DCN can inhibit collagen binding. There is no serine/glycine dipeptide sequence expected for the attachment of O-linked glycosaminoglycans and this is probably not a proteoglycan. The O-linked polysaccharide on 54-Ser is probably the mucin type linked to GalNAc. Post-translationally, the N-linked glycan at Asn-282 is composed of variable structures of GlcNAc, mannose, fucose, HexNAc and hexose. In terms of tissue distribution, higher levels in osteoarthritic articular cartilage, aorta, uterus. Moderate expression in small intestine, heart, liver, bladder, ovary, stomach, and in the adrenal, thyroid, and mammary glands. Low expression in trachea, bone marrow, and lung. Colocalizes with TGFB1 in chondrocytes within osteoarthritic (OA) lesions of articular cartilage.

The protein localises to the secreted. It localises to the extracellular space. It is found in the extracellular matrix. Negatively regulates periodontal ligament (PDL) differentiation and mineralization to ensure that the PDL is not ossified and to maintain homeostasis of the tooth-supporting system. Inhibits BMP2-induced cytodifferentiation of PDL cells by preventing its binding to BMPR1B/BMP type-1B receptor, resulting in inhibition of BMP-dependent activation of SMAD proteins. Critical regulator of TGF-beta in articular cartilage and plays an essential role in cartilage homeostasis and osteoarthritis (OA) pathogenesis. Negatively regulates chondrogenesis in the articular cartilage by blocking the TGF-beta/receptor interaction on the cell surface and inhibiting the canonical TGF-beta/Smad signal. Binds calcium and plays a role in osteoblast-driven collagen biomineralization activity. The sequence is that of Asporin (ASPN) from Homo sapiens (Human).